The following is a 551-amino-acid chain: Cytochrome P450 monooxygenase abl5 (551 aa).

The N-linked (GlcNAc...) asparagine glycan is linked to Asn-24. A helical transmembrane segment spans residues 37 to 57 (VVLNTLTAIVVVWICYRAVIY). Asn-174, Asn-218, Asn-283, Asn-307, and Asn-441 each carry an N-linked (GlcNAc...) asparagine glycan. Residue Cys-495 participates in heme binding.

Belongs to the cytochrome P450 family. The cofactor is heme.

The protein localises to the membrane. Its function is as follows. Cytochrome P450 monooxygenase; part of the gene cluster that mediates the biosynthesis of abscisic acid (ABA), a phytohormone that acts antagonistically toward salicylic acid (SA), jasmonic acid (JA) and ethylene (ETH) signaling, to impede plant defense responses. The first step of the pathway catalyzes the reaction from farnesyl diphosphate to alpha-ionylideneethane performed by the alpha-ionylideneethane synthase abl3 via a three-step reaction mechanism involving 2 neutral intermediates, beta-farnesene and allofarnesene. The cytochrome P450 monooxygenase abl1 might then be involved in the conversion of alpha-ionylideneethane to alpha-ionylideneacetic acid. Alpha-ionylideneacetic acid is further converted to abscisic acid in 2 steps involving the cytochrome P450 monooxygenase abl2 and the short-chain dehydrogenase/reductase abl4, via the intermediates 1'-deoxy-ABA or 1',4'-trans-diol-ABA, depending on the order of action of these 2 enzymes. Abl2 is responsible for the hydroxylation of carbon atom C-1' and abl4 might be involved in the oxidation of the C-4' carbon atom. The cytochrome monooxygenase abl5 seems not essential for the biosynthesis of ABA and its function remains to be identified. This is Cytochrome P450 monooxygenase abl5 from Leptosphaeria maculans (strain JN3 / isolate v23.1.3 / race Av1-4-5-6-7-8) (Blackleg fungus).